A 204-amino-acid polypeptide reads, in one-letter code: MRG/MORF4L-binding protein (204 aa).

The span at Met-1–Lys-15 shows a compositional bias: gly residues. Residues Met-1–Glu-27 are disordered. An N-acetylglycine modification is found at Gly-2. At Ser-23 the chain carries Phosphoserine. Lys-127 is covalently cross-linked (Glycyl lysine isopeptide (Lys-Gly) (interchain with G-Cter in SUMO2)). Composition is skewed to basic and acidic residues over residues Glu-128 to Ala-140 and Ala-153 to Asp-175. The interval Glu-128 to Thr-204 is disordered. Residues Ala-189–Ala-198 are compositionally biased toward low complexity. Phosphoserine is present on residues Ser-191 and Ser-195.

It belongs to the EAF7 family. Component of the NuA4 histone acetyltransferase complex which contains the catalytic subunit KAT5/TIP60 and the subunits EP400, TRRAP/PAF400, BRD8/SMAP, EPC1, DMAP1/DNMAP1, RUVBL1/TIP49, RUVBL2, ING3, actin, ACTL6A/BAF53A, MORF4L1/MRG15, MORF4L2/MRGX, MRGBP, YEATS4/GAS41, VPS72/YL1 and MEAF6. MRGBP may interact directly with MORF4L1/MRG15 and MORF4L2/MRGX.

Its subcellular location is the nucleus. Component of the NuA4 histone acetyltransferase (HAT) complex which is involved in transcriptional activation of select genes principally by acetylation of nucleosomal histones H4 and H2A. This modification may both alter nucleosome - DNA interactions and promote interaction of the modified histones with other proteins which positively regulate transcription. This complex may be required for the activation of transcriptional programs associated with oncogene and proto-oncogene mediated growth induction, tumor suppressor mediated growth arrest and replicative senescence, apoptosis, and DNA repair. NuA4 may also play a direct role in DNA repair when recruited to sites of DNA damage. The chain is MRG/MORF4L-binding protein (Mrgbp) from Mus musculus (Mouse).